We begin with the raw amino-acid sequence, 478 residues long: Pyruvate kinase (478 aa).

Arg-35 serves as a coordination point for substrate. Residues Asn-37, Ser-39, and Asp-69 each contribute to the K(+) site. 37 to 40 (NMSH) serves as a coordination point for ATP. Arg-76 and Lys-157 together coordinate ATP. Glu-219 contacts Mg(2+). Residues Gly-242, Asp-243, and Thr-275 each contribute to the substrate site. A Mg(2+)-binding site is contributed by Asp-243.

This sequence belongs to the pyruvate kinase family. As to quaternary structure, homotetramer. Requires Mg(2+) as cofactor. The cofactor is K(+).

It carries out the reaction pyruvate + ATP = phosphoenolpyruvate + ADP + H(+). It participates in carbohydrate degradation; glycolysis; pyruvate from D-glyceraldehyde 3-phosphate: step 5/5. The sequence is that of Pyruvate kinase (pyk) from Methylorubrum extorquens (strain ATCC 14718 / DSM 1338 / JCM 2805 / NCIMB 9133 / AM1) (Methylobacterium extorquens).